We begin with the raw amino-acid sequence, 1028 residues long: U2 snRNP-associated SURP motif-containing protein (1028 aa).

Disordered stretches follow at residues methionine 1–lysine 111 and valine 141–threonine 272. Alanine 2 is modified (N-acetylalanine). Polar residues predominate over residues glycine 7–threonine 16. A compositionally biased stretch (basic residues) spans threonine 45–asparagine 54. Residues tyrosine 55–leucine 64 are compositionally biased toward basic and acidic residues. Serine 67 carries the phosphoserine modification. A Glycyl lysine isopeptide (Lys-Gly) (interchain with G-Cter in SUMO2) cross-link involves residue lysine 80. Residues alanine 92–leucine 121 are a coiled coil. 2 stretches are compositionally biased toward basic and acidic residues: residues serine 97–lysine 111 and alanine 144–glycine 155. Residues lysine 145 and lysine 168 each participate in a glycyl lysine isopeptide (Lys-Gly) (interchain with G-Cter in SUMO2) cross-link. A compositionally biased stretch (polar residues) spans asparagine 169–arginine 178. Residues glutamate 186–histidine 222 are compositionally biased toward basic and acidic residues. Residues leucine 192–glutamate 232 are a coiled coil. The residue at position 202 (serine 202) is a Phosphoserine. A Glycyl lysine isopeptide (Lys-Gly) (interchain with G-Cter in SUMO2) cross-link involves residue lysine 208. Phosphoserine is present on serine 236. Basic and acidic residues predominate over residues aspartate 239–serine 249. In terms of domain architecture, RRM spans threonine 273–alanine 354. One copy of the SURP motif repeat lies at leucine 429 to tyrosine 472. Serine 484 carries the phosphoserine modification. The region spanning leucine 533 to valine 678 is the CID domain. Threonine 718 is modified (phosphothreonine). Residues lysine 747 and lysine 748 each participate in a glycyl lysine isopeptide (Lys-Gly) (interchain with G-Cter in SUMO2) cross-link. N6-acetyllysine; alternate is present on lysine 759. Lysine 759 is covalently cross-linked (Glycyl lysine isopeptide (Lys-Gly) (interchain with G-Cter in SUMO2); alternate). Disordered regions lie at residues lysine 777 to arginine 840 and glutamine 854 to histidine 1028. Residues glutamate 779–lysine 809 adopt a coiled-coil conformation. The segment covering glutamate 785–threonine 805 has biased composition (acidic residues). 3 positions are modified to phosphoserine: serine 787, serine 799, and serine 810. Basic and acidic residues-rich tracts occupy residues lysine 809–arginine 840 and glutamine 873–arginine 921. Glycyl lysine isopeptide (Lys-Gly) (interchain with G-Cter in SUMO2) cross-links involve residues lysine 821, lysine 828, and lysine 831. Positions serine 836–lysine 914 form a coiled coil. Residue threonine 930 is modified to Phosphothreonine. Phosphoserine is present on residues serine 945 and serine 947. A compositionally biased stretch (basic and acidic residues) spans lysine 949–lysine 979. Basic residues predominate over residues threonine 990–histidine 1028.

The protein belongs to the splicing factor SR family. In terms of assembly, interacts with ERBB4.

Its subcellular location is the nucleus. This Pongo abelii (Sumatran orangutan) protein is U2 snRNP-associated SURP motif-containing protein (U2SURP).